A 340-amino-acid chain; its full sequence is UPF0324 membrane protein BA_5405/GBAA_5405/BAS5024 (340 aa).

A run of 10 helical transmembrane segments spans residues 13 to 35 (FGFSQGIGITLLIAIVAKYLAEL), 40 to 59 (IMGQLVIAILIGMVWRAAIG), 99 to 118 (VLVIAAVVITFTLFVVYGLT), 128 to 150 (GILTACGTAICGAAAVVAIAPQV), 157 to 179 (TAVGAAIIAILGTIFTLIYTLLY), 189 to 211 (YGVFSGATLHEIAHVIAAAAPGG), 218 to 240 (AVIVKLTRVTMLVPVAILIGVWF), 255 to 277 (LPIPWFIFGFLAMSAVHSLGIIP), 279 to 301 (VVAGYIVVLAYMLIAMAMAGLGL), and 316 to 338 (FVAGLIGSVCLSVLGYVLVYALG).

This sequence belongs to the UPF0324 family.

It is found in the cell membrane. The protein is UPF0324 membrane protein BA_5405/GBAA_5405/BAS5024 of Bacillus anthracis.